We begin with the raw amino-acid sequence, 479 residues long: MAQHTVYFPDAFLTQMREAMPSTLSFDDFLAACQRPLRRSIRVNTLKTSVADFLQLTAPYGWTLTPIPWCEEGFWIERDNEDALPLGSTAEHLSGLFYIQEASSMLPVAALFADGNAPQRVMDVAAAPGSKTTQIAARMNNEGAILANEFSASRVKVLHANISRCGISNVALTHFDGRVFGAAVPEMFDAILLDAPCSGEGVVRKDPDALKNWSPESNQEIAATQRELIDSAFHALRPGGTLVYSTCTLNREENEAVCLWLKETYPDAVEFLPLGDLFPGANKALTEEGFLHVFPQIYDCEGFFVARLRKTQAIPALPTPKYKVGNFPFSPVKDREAGQIRQAAASVGLNWDENLRLWQRDKELWLFPVGIEALIGKVRFSRLGIKLAETHNKGYRWQHEAVIALASPDNVNAFELTPQEAEEWYRGRDVYPQAAPVADDVLVTFQHQPIGLAKRIGSRLKNSYPRELVRDGKLFTGNA.

S-adenosyl-L-methionine-binding positions include Ala-125 to Lys-131, Glu-149, Asp-176, and Asp-194. Cys-247 acts as the Nucleophile in catalysis.

The protein belongs to the class I-like SAM-binding methyltransferase superfamily. RsmB/NOP family.

It localises to the cytoplasm. It carries out the reaction cytidine(1407) in 16S rRNA + S-adenosyl-L-methionine = 5-methylcytidine(1407) in 16S rRNA + S-adenosyl-L-homocysteine + H(+). Its function is as follows. Specifically methylates the cytosine at position 1407 (m5C1407) of 16S rRNA. This is Ribosomal RNA small subunit methyltransferase F from Escherichia coli O81 (strain ED1a).